The chain runs to 100 residues: Apolipoprotein C-II (100 aa).

The first 22 residues, 1–22 (MGSRFLLALFLILLVLGCEVQA), serve as a signal peptide directing secretion. Positions 66-74 (SVDEKLRDM) are lipid binding. The interval 78–100 (SSAAMTTYASIFTDQILTLLKGE) is lipoprotein lipase cofactor.

The protein belongs to the apolipoprotein C2 family. Proapolipoprotein C-II is synthesized as a sialic acid containing glycoprotein which is subsequently desialylated prior to its proteolytic processing. In terms of processing, proapolipoprotein C-II, the major form found in plasma undergoes proteolytic cleavage of its N-terminal hexapeptide to generate the mature form apolipoprotein C-II, which occurs as the minor form in plasma.

It localises to the secreted. Functionally, component of chylomicrons, very low-density lipoproteins (VLDL), low-density lipoproteins (LDL), and high-density lipoproteins (HDL) in plasma. Plays an important role in lipoprotein metabolism as an activator of lipoprotein lipase. This Microtus ochrogaster (Prairie vole) protein is Apolipoprotein C-II (APOC2).